Here is a 146-residue protein sequence, read N- to C-terminus: MRKMFICLHNTYSAKQVEEFGRIAYGFDINTIVVTKATASAAQSGIPTLHKMAYKLGKNVLFFEELDDAIEVLRPEKVFLIGNKSICDEKVDFNEVGENDLVVFCGASTGFTKLELEKGLGRYIVENEIGALGNLAIFLYEMSKKI.

The protein to A.pernix APE2001.

The catalysed reaction is Endonucleolytic cleavage of DNA to give specific double-stranded fragments with terminal 5'-phosphates.. Its function is as follows. A putative type II restriction enzyme, its methylase would be M.MjaORF1200P (AC Q58600). The chain is Putative type II restriction enzyme MjaORF1200P from Methanocaldococcus jannaschii (strain ATCC 43067 / DSM 2661 / JAL-1 / JCM 10045 / NBRC 100440) (Methanococcus jannaschii).